Consider the following 193-residue polypeptide: Ion-translocating oxidoreductase complex subunit B (193 aa).

A hydrophobic region spans residues 1–26 (MSTMLIAVILLTLLALFFGVLLGFAA). The 59-residue stretch at 32–90 (EGNPIVDELEAILPQTQCGQCGYPGCRPYAEAIANGDKVNKCPPGGTATMEKLANLMGV) folds into the 4Fe-4S domain. [4Fe-4S] cluster contacts are provided by C49, C52, C57, C73, C114, C117, C120, C124, C144, C147, C150, and C154. 2 4Fe-4S ferredoxin-type domains span residues 105-134 (KVAY…GAGK) and 136-164 (MHTV…MIPV).

This sequence belongs to the 4Fe4S bacterial-type ferredoxin family. RnfB subfamily. The complex is composed of six subunits: RnfA, RnfB, RnfC, RnfD, RnfE and RnfG. [4Fe-4S] cluster is required as a cofactor.

It localises to the cell inner membrane. Functionally, part of a membrane-bound complex that couples electron transfer with translocation of ions across the membrane. This chain is Ion-translocating oxidoreductase complex subunit B, found in Shewanella sp. (strain ANA-3).